We begin with the raw amino-acid sequence, 732 residues long: Polyphosphate kinase (732 aa).

ATP is bound at residue N61. Mg(2+)-binding residues include R417 and R447. The Phosphohistidine intermediate role is filled by H477. ATP contacts are provided by Y510, R606, and H634. Residues 699-718 (DGTYRQRQPAPGEAERGTHS) are disordered.

The protein belongs to the polyphosphate kinase 1 (PPK1) family. Mg(2+) serves as cofactor. An intermediate of this reaction is the autophosphorylated ppk in which a phosphate is covalently linked to a histidine residue through a N-P bond.

It catalyses the reaction [phosphate](n) + ATP = [phosphate](n+1) + ADP. Functionally, catalyzes the reversible transfer of the terminal phosphate of ATP to form a long-chain polyphosphate (polyP). This chain is Polyphosphate kinase, found in Thermosynechococcus vestitus (strain NIES-2133 / IAM M-273 / BP-1).